Reading from the N-terminus, the 562-residue chain is Tissue-type plasminogen activator (562 aa).

Positions 1–22 are cleaved as a signal peptide; it reads MDAMKRGLCCVLLLCGAVFVSP. The propeptide occupies 23 to 32; sequence SQEIHARFRR. Residues 33–35 constitute a propeptide, removed by plasmin; the sequence is GAR. A Fibronectin type-I domain is found at 39–81; that stretch reads VICRDEKTQMIYQQHQSWLRPVLRSNRVEYCWCNSGRAQCHSV. 17 cysteine pairs are disulfide-bonded: cysteine 41–cysteine 71, cysteine 69–cysteine 78, cysteine 86–cysteine 97, cysteine 91–cysteine 108, cysteine 110–cysteine 119, cysteine 127–cysteine 208, cysteine 148–cysteine 190, cysteine 179–cysteine 203, cysteine 215–cysteine 296, cysteine 236–cysteine 278, cysteine 267–cysteine 291, cysteine 299–cysteine 430, cysteine 342–cysteine 358, cysteine 350–cysteine 419, cysteine 444–cysteine 519, cysteine 476–cysteine 492, and cysteine 509–cysteine 537. Positions 42–52 are important for binding to annexin A2; sequence RDEKTQMIYQQ. Residues 82 to 120 enclose the EGF-like domain; that stretch reads PVKSCSEPRCFNGGTCQQALYFSDFVCQCPEGFAGKCCE. The O-linked (Fuc) threonine glycan is linked to threonine 96. Kringle domains are found at residues 127-208 and 215-296; these read CYED…TPAC and CYFG…VPSC. Asparagine 152 carries an N-linked (GlcNAc...) asparagine glycan. N-linked (GlcNAc...) asparagine; partial glycosylation occurs at asparagine 219. Positions 311 to 561 constitute a Peptidase S1 domain; it reads IKGGLFADIA…YLDWIRDNMR (251 aa). Active-site charge relay system residues include histidine 357 and aspartate 406. Residue asparagine 483 is glycosylated (N-linked (GlcNAc...) asparagine). Catalysis depends on serine 513, which acts as the Charge relay system.

Belongs to the peptidase S1 family. Heterodimer of chain A and chain B held by a disulfide bond. Forms a heterodimer with SERPINA5. Binds to fibrin with high affinity. This interaction leads to an increase in the catalytic efficiency of the enzyme between 100-fold and 1000-fold, due to an increase in affinity for plasminogen. Similarly, binding to heparin increases the activation of plasminogen. Binds to annexin A2, cytokeratin-8, fibronectin and laminin. Binds to mannose receptor and the low-density lipoprotein receptor-related protein (LRP1); these proteins are involved in TPA clearance. Yet unidentified interactions on endothelial cells and vascular smooth muscle cells (VSMC) lead to a 100-fold stimulation of plasminogen activation. In addition, binding to VSMC reduces TPA inhibition by PAI-1 by 30-fold. Binds LRP1B; binding is followed by internalization and degradation. Interacts with SERPINE1. In complex with SERPINE1, interacts with SORL1. Interacts with apyrase from Anopheles gambiae saliva; the interaction results in PLAT activation probably via an allosteric activation mechanism. Post-translationally, the single chain, almost fully active enzyme, can be further processed into a two-chain fully active form by a cleavage after Arg-310 catalyzed by plasmin, tissue kallikrein or factor Xa. Differential cell-specific N-linked glycosylation gives rise to two glycoforms, type I (glycosylated at Asn-219) and type II (not glycosylated at Asn-219). The single chain type I glycoform is less readily converted into the two-chain form by plasmin, and the two-chain type I glycoform has a lower activity than the two-chain type II glycoform in the presence of fibrin. In terms of processing, N-glycosylation of Asn-152; the bound oligomannosidic glycan is involved in the interaction with the mannose receptor. Post-translationally, characterization of O-linked glycan was studied in Bowes melanoma cell line. In terms of tissue distribution, synthesized in numerous tissues (including tumors) and secreted into most extracellular body fluids, such as plasma, uterine fluid, saliva, gingival crevicular fluid, tears, seminal fluid, and milk.

It localises to the secreted. The protein localises to the extracellular space. It catalyses the reaction Specific cleavage of Arg-|-Val bond in plasminogen to form plasmin.. With respect to regulation, inhibited by SERPINA5. Inhibited by SERPINE1. In terms of biological role, converts the abundant, but inactive, zymogen plasminogen to plasmin by hydrolyzing a single Arg-Val bond in plasminogen. By controlling plasmin-mediated proteolysis, it plays an important role in tissue remodeling and degradation, in cell migration and many other physiopathological events. During oocyte activation, plays a role in cortical granule reaction in the zona reaction, which contributes to the block to polyspermy. This chain is Tissue-type plasminogen activator, found in Homo sapiens (Human).